A 138-amino-acid polypeptide reads, in one-letter code: Glia maturation factor (138 aa).

Positions 3–138 constitute an ADF-H domain; the sequence is DNQICDISNE…TEEWLKAKLK (136 aa).

The protein belongs to the actin-binding proteins ADF family. GMF subfamily. As to expression, in ovaries, expressed in follicular epithelium, in polar cells, migrating border cells, and centripedal cells (at protein level).

The protein localises to the cell projection. The protein resides in the lamellipodium. Its subcellular location is the cytoplasm. It localises to the perinuclear region. It is found in the nucleus. The protein localises to the cell cortex. Its function is as follows. Inhibits Arp2/3-mediated actin nucleation. Together with flr, promotes Arp2/3-nucleated actin filament array disassembly. Promotes debranching. Regulates lamellipodial protrusion dynamics possibly by facilitating lamellipodial retraction. In egg chambers, enhances the retraction dynamics of cellular extensions in border cells and thus together with flr plays an important role in directional migration of border cell clusters. This is Glia maturation factor from Drosophila melanogaster (Fruit fly).